Consider the following 152-residue polypeptide: Endoribonuclease YbeY (152 aa).

3 residues coordinate Zn(2+): His116, His120, and His126.

It belongs to the endoribonuclease YbeY family. Requires Zn(2+) as cofactor.

The protein resides in the cytoplasm. In terms of biological role, single strand-specific metallo-endoribonuclease involved in late-stage 70S ribosome quality control and in maturation of the 3' terminus of the 16S rRNA. This chain is Endoribonuclease YbeY, found in Mycoplasma mobile (strain ATCC 43663 / 163K / NCTC 11711) (Mesomycoplasma mobile).